We begin with the raw amino-acid sequence, 206 residues long: Probable NAD(+) phosphorylase Rv3189 (206 aa).

The protein belongs to the MbcT/ParT/Res family. As to quaternary structure, forms a heterotetramer with cognate antitoxin Rv3188.

It catalyses the reaction phosphate + NAD(+) = ADP-alpha-D-ribose 1''-phosphate + nicotinamide + H(+). Its function is as follows. Probable toxic component of a type II toxin-antitoxin (TA) system. Degrades NAD(+) by phosphorolysis. Neutralized by its cognate antitoxin Rv3188. This chain is Probable NAD(+) phosphorylase Rv3189, found in Mycobacterium tuberculosis (strain ATCC 25618 / H37Rv).